A 189-amino-acid polypeptide reads, in one-letter code: Large ribosomal subunit protein bL17 (189 aa).

Residues 136-189 form a disordered region; the sequence is KAAPAAEEEVVETEEAPAVEAEAAESEEAPAAEAEAAEAEAAETEEAPAAEDKK. Positions 141-189 are enriched in acidic residues; that stretch reads AEEEVVETEEAPAVEAEAAESEEAPAAEAEAAEAEAAETEEAPAAEDKK.

The protein belongs to the bacterial ribosomal protein bL17 family. As to quaternary structure, part of the 50S ribosomal subunit. Contacts protein L32.

This chain is Large ribosomal subunit protein bL17, found in Paenarthrobacter aurescens (strain TC1).